An 849-amino-acid polypeptide reads, in one-letter code: Protein translocase subunit SecA (849 aa).

Residues Gln-85, 103 to 107, and Asp-493 each bind ATP; that span reads GEGKT. Residues Cys-832, Cys-834, Cys-843, and His-844 each contribute to the Zn(2+) site.

The protein belongs to the SecA family. As to quaternary structure, monomer and homodimer. Part of the essential Sec protein translocation apparatus which comprises SecA, SecYEG and auxiliary proteins SecDF. Other proteins may also be involved. Requires Zn(2+) as cofactor.

It is found in the cell membrane. The protein localises to the cytoplasm. The enzyme catalyses ATP + H2O + cellular proteinSide 1 = ADP + phosphate + cellular proteinSide 2.. In terms of biological role, part of the Sec protein translocase complex. Interacts with the SecYEG preprotein conducting channel. Has a central role in coupling the hydrolysis of ATP to the transfer of proteins into and across the cell membrane, serving as an ATP-driven molecular motor driving the stepwise translocation of polypeptide chains across the membrane. The sequence is that of Protein translocase subunit SecA from Streptococcus thermophilus (strain ATCC BAA-491 / LMD-9).